The sequence spans 987 residues: Ephrin type-B receptor 4 (987 aa).

The N-terminal stretch at 1-15 is a signal peptide; sequence MELRVLLCWASLAAA. The Extracellular portion of the chain corresponds to 16–539; that stretch reads LEETLLNTKL…ESEGWREQLA (524 aa). Residues 17–202 form the Eph LBD domain; sequence EETLLNTKLE…FYKKCAQLTV (186 aa). 2 cysteine pairs are disulfide-bonded: Cys-61–Cys-184 and Cys-97–Cys-107. Asn-203, Asn-335, and Asn-426 each carry an N-linked (GlcNAc...) asparagine glycan. Fibronectin type-III domains are found at residues 323–432 and 436–529; these read PPSA…TDRE and AVSD…TQLD. Residues 540-560 form a helical membrane-spanning segment; that stretch reads LIAGTAVVGVVLVLVVIVVAV. At 561-987 the chain is on the cytoplasmic side; the sequence is LCLRKQSNGR…GGTGGPAPQY (427 aa). The region spanning 615-899 is the Protein kinase domain; the sequence is VKIEEVIGAG…ENGGASHPLL (285 aa). ATP contacts are provided by residues 621–629 and Lys-647; that span reads IGAGEFGEV. Asp-740 serves as the catalytic Proton acceptor. 4 positions are modified to phosphoserine: Ser-769, Ser-770, Ser-911, and Ser-943. In terms of domain architecture, SAM spans 907-971; it reads SAFGSVGEWL…LASVQHMKSQ (65 aa). The disordered stretch occupies residues 965 to 987; that stretch reads VQHMKSQAKPGTPGGTGGPAPQY. Position 976 is a phosphothreonine (Thr-976). The span at 976–987 shows a compositional bias: gly residues; the sequence is TPGGTGGPAPQY. The PDZ-binding signature appears at 985 to 987; sequence PQY. A Phosphotyrosine modification is found at Tyr-987.

It belongs to the protein kinase superfamily. Tyr protein kinase family. Ephrin receptor subfamily. Heterotetramer upon binding of the ligand. The heterotetramer is composed of an ephrin dimer and a receptor dimer. Oligomerization is probably required to induce biological responses. Interacts with RASA1; the interaction depends on EPHB4 tyrosine-phosphorylation. In terms of processing, phosphorylated; autophosphorylation is stimulated by EFNB2. Abundantly expressed in placenta but also detected in kidney, liver, lung, pancreas, skeletal muscle and heart. Expressed in primitive and myeloid, but not lymphoid, hematopoietic cells. Also observed in cell lines derived from liver, breast, colon, lung, melanocyte and cervix.

The protein localises to the cell membrane. It carries out the reaction L-tyrosyl-[protein] + ATP = O-phospho-L-tyrosyl-[protein] + ADP + H(+). Its function is as follows. Receptor tyrosine kinase which binds promiscuously transmembrane ephrin-B family ligands residing on adjacent cells, leading to contact-dependent bidirectional signaling into neighboring cells. The signaling pathway downstream of the receptor is referred to as forward signaling while the signaling pathway downstream of the ephrin ligand is referred to as reverse signaling. Together with its cognate ligand/functional ligand EFNB2 it is involved in the regulation of cell adhesion and migration, and plays a central role in heart morphogenesis, angiogenesis and blood vessel remodeling and permeability. EPHB4-mediated forward signaling controls cellular repulsion and segregation from EFNB2-expressing cells. The sequence is that of Ephrin type-B receptor 4 (EPHB4) from Homo sapiens (Human).